We begin with the raw amino-acid sequence, 369 residues long: Phospho-N-acetylmuramoyl-pentapeptide-transferase (369 aa).

The next 10 membrane-spanning stretches (helical) occupy residues isoleucine 2 to phenylalanine 22, glycine 54 to leucine 74, glycine 80 to leucine 100, phenylalanine 113 to valine 133, alanine 158 to isoleucine 178, leucine 195 to phenylalanine 215, proline 241 to tryptophan 261, isoleucine 268 to leucine 288, leucine 293 to isoleucine 313, and phenylalanine 347 to leucine 367.

This sequence belongs to the glycosyltransferase 4 family. MraY subfamily. Requires Mg(2+) as cofactor.

It is found in the cell membrane. The catalysed reaction is UDP-N-acetyl-alpha-D-muramoyl-L-alanyl-gamma-D-glutamyl-meso-2,6-diaminopimeloyl-D-alanyl-D-alanine + di-trans,octa-cis-undecaprenyl phosphate = di-trans,octa-cis-undecaprenyl diphospho-N-acetyl-alpha-D-muramoyl-L-alanyl-D-glutamyl-meso-2,6-diaminopimeloyl-D-alanyl-D-alanine + UMP. Its pathway is cell wall biogenesis; peptidoglycan biosynthesis. Functionally, catalyzes the initial step of the lipid cycle reactions in the biosynthesis of the cell wall peptidoglycan: transfers peptidoglycan precursor phospho-MurNAc-pentapeptide from UDP-MurNAc-pentapeptide onto the lipid carrier undecaprenyl phosphate, yielding undecaprenyl-pyrophosphoryl-MurNAc-pentapeptide, known as lipid I. The protein is Phospho-N-acetylmuramoyl-pentapeptide-transferase of Tropheryma whipplei (strain Twist) (Whipple's bacillus).